We begin with the raw amino-acid sequence, 40 residues long: Photosystem II reaction center protein J (40 aa).

The helical transmembrane segment at 8–28 (IPLWVIGTVAGIPVIGLIGIF) threads the bilayer.

The protein belongs to the PsbJ family. PSII is composed of 1 copy each of membrane proteins PsbA, PsbB, PsbC, PsbD, PsbE, PsbF, PsbH, PsbI, PsbJ, PsbK, PsbL, PsbM, PsbT, PsbX, PsbY, PsbZ, Psb30/Ycf12, at least 3 peripheral proteins of the oxygen-evolving complex and a large number of cofactors. It forms dimeric complexes.

It is found in the plastid. Its subcellular location is the chloroplast thylakoid membrane. Functionally, one of the components of the core complex of photosystem II (PSII). PSII is a light-driven water:plastoquinone oxidoreductase that uses light energy to abstract electrons from H(2)O, generating O(2) and a proton gradient subsequently used for ATP formation. It consists of a core antenna complex that captures photons, and an electron transfer chain that converts photonic excitation into a charge separation. The chain is Photosystem II reaction center protein J from Nasturtium officinale (Watercress).